A 205-amino-acid chain; its full sequence is Helix-loop-helix protein 4 (205 aa).

The tract at residues 3–16 is basic motif; the sequence is MVVAKRNARERTRV. Residues 3–56 form the bHLH domain; it reads MVVAKRNARERTRVHTVNQAFLVLKQHLPSLRQFTKRVSKLRILNAAITYIDTL. Residues 17–56 form a helix-loop-helix motif region; sequence HTVNQAFLVLKQHLPSLRQFTKRVSKLRILNAAITYIDTL.

As to expression, expressed in the ADL sensory neurons.

It localises to the nucleus. Its function is as follows. Acts as a transcriptional regulator. May mediate transcriptional activation by binding to the E-box motif 5'-CANNTG-3'. Required for the correct morphology, terminal identity and function of the ADL sensory neurons by controlling the expression of the ADL-specific gene repertoire, including chemoreceptor encoding genes, ion channel encoding genes, neuropeptides and the neurotransmitter eat-4. Regulates the expression of the srh-234 chemoreceptor encoding gene in the ADL neurons under feeding conditions. Plays a role in the chemorepulsive response toward ascaroside pheromones mediated by the ADL sensory neurons. This chain is Helix-loop-helix protein 4 (hlh-4), found in Caenorhabditis elegans.